Consider the following 38-residue polypeptide: MTQSNPNEQNVELNRTSLYWGLLLIFVLAVLFSNYSFN.

Residues 17-37 (SLYWGLLLIFVLAVLFSNYSF) form a helical membrane-spanning segment.

Belongs to the PsbL family. PSII is composed of 1 copy each of membrane proteins PsbA, PsbB, PsbC, PsbD, PsbE, PsbF, PsbH, PsbI, PsbJ, PsbK, PsbL, PsbM, PsbT, PsbX, PsbY, PsbZ, Psb30/Ycf12, at least 3 peripheral proteins of the oxygen-evolving complex and a large number of cofactors. It forms dimeric complexes.

Its subcellular location is the plastid. It is found in the chloroplast thylakoid membrane. One of the components of the core complex of photosystem II (PSII). PSII is a light-driven water:plastoquinone oxidoreductase that uses light energy to abstract electrons from H(2)O, generating O(2) and a proton gradient subsequently used for ATP formation. It consists of a core antenna complex that captures photons, and an electron transfer chain that converts photonic excitation into a charge separation. This subunit is found at the monomer-monomer interface and is required for correct PSII assembly and/or dimerization. This Bowenia serrulata (Byfield fern) protein is Photosystem II reaction center protein L.